A 301-amino-acid polypeptide reads, in one-letter code: uncharacterized protein (301 aa).

The FHA domain occupies 27–85; that stretch reads YKIGRHTNKSTSPSPSNLFFNSKVLSRQHAELWLDKDTLSVYIRDVKSSNGTFVNETRL. A disordered region spans residues 187 to 236; it reads TGKTRDNRNNHHYSRKSSPHISSLAVPSTKHLDGERDRNLKRSTSPLSSS. Residue Ser204 is modified to Phosphoserine. Over residues 216 to 226 the composition is skewed to basic and acidic residues; sequence KHLDGERDRNL. Ser231 is modified (phosphoserine).

In terms of assembly, interacts with sad1.

The protein resides in the nucleus. This is an uncharacterized protein from Schizosaccharomyces pombe (strain 972 / ATCC 24843) (Fission yeast).